We begin with the raw amino-acid sequence, 681 residues long: Serine/threonine-protein kinase PAK 6 (681 aa).

Disordered regions lie at residues 1-30 (MFRKKKKKRPEISAPQNFQHRVHTSFDPKE), 200-256 (QSSP…ESSL), and 268-355 (TAAT…PRTW). Positions 12 to 25 (ISAPQNFQHRVHTS) constitute a CRIB domain. The tract at residues 26 to 406 (FDPKEGKFVG…VVDQGDPRLL (381 aa)) is linker. 2 stretches are compositionally biased toward low complexity: residues 201 to 212 (SSPPGASPPTGT) and 268 to 278 (TAATAPPSSSK). Positions 308-333 (SLPSDQPVGTFSPLTTSDTSSPQKSL) are enriched in polar residues. One can recognise a Protein kinase domain in the interval 407 to 658 (LDSYVKIGEG…AQELLDHPFL (252 aa)). ATP contacts are provided by residues 413-421 (IGEGSTGIV) and lysine 436. Aspartate 526 functions as the Proton acceptor in the catalytic mechanism. The residue at position 560 (serine 560) is a Phosphoserine; by autocatalysis.

The protein belongs to the protein kinase superfamily. STE Ser/Thr protein kinase family. STE20 subfamily. In terms of assembly, interacts tightly with GTP-bound but not GDP-bound CDC42/p21 and RAC1. Interacts with the androgen receptor AR. Interacts with IQGAP1 and PPM1B. Post-translationally, autophosphorylated. Phosphorylated by MAP2K6/MAPKK6, leading to PAK6 activation.

The protein localises to the cytoplasm. The protein resides in the nucleus. It carries out the reaction L-seryl-[protein] + ATP = O-phospho-L-seryl-[protein] + ADP + H(+). The enzyme catalyses L-threonyl-[protein] + ATP = O-phospho-L-threonyl-[protein] + ADP + H(+). In terms of biological role, serine/threonine protein kinase that plays a role in the regulation of gene transcription. The kinase activity is induced by various effectors including AR or MAP2K6/MAPKK6. Phosphorylates the DNA-binding domain of androgen receptor/AR and thereby inhibits AR-mediated transcription. Also inhibits ESR1-mediated transcription. May play a role in cytoskeleton regulation by interacting with IQGAP1. May protect cells from apoptosis through phosphorylation of BAD. The protein is Serine/threonine-protein kinase PAK 6 (PAK6) of Pongo abelii (Sumatran orangutan).